We begin with the raw amino-acid sequence, 86 residues long: Sulmotoxin 2 (86 aa).

A signal peptide spans 1–21 (MKTLLLALAVVAFMCLDSVYP). Cystine bridges form between cysteine 24-cysteine 47, cysteine 27-cysteine 35, cysteine 41-cysteine 62, cysteine 66-cysteine 77, and cysteine 78-cysteine 83.

This sequence belongs to the three-finger toxin family. Ancestral subfamily. Boigatoxin sub-subfamily. In terms of assembly, monomer. As to expression, expressed by the venom gland.

It localises to the secreted. Its function is as follows. Probable neurotoxin. Is not toxic to mice and geckos. The polypeptide is Sulmotoxin 2 (Spilotes sulphureus (Amazon puffing snake)).